Reading from the N-terminus, the 77-residue chain is UPF0154 protein LCK_00994 (77 aa).

A helical membrane pass occupies residues 5–25 (FGILIFVLGLVIGLVIGFFVA). The disordered stretch occupies residues 50 to 77 (SMGQKPSQKKLNQMMAQMKQQSEQSQKK).

Belongs to the UPF0154 family.

It is found in the cell membrane. The protein is UPF0154 protein LCK_00994 of Leuconostoc citreum (strain KM20).